The following is a 1193-amino-acid chain: Protein diaphanous homolog 3 (1193 aa).

Basic residues predominate over residues Met1–His10. The disordered stretch occupies residues Met1 to Arg57. A Phosphoserine modification is found at Ser26. The Nuclear localization signal signature appears at Pro36–Phe60. Position 68 is a phosphothreonine (Thr68). 2 positions are modified to phosphoserine: Ser77 and Ser175. Positions Pro114–Asp476 constitute a GBD/FH3 domain. Positions Ile497–Leu554 form a coiled coil. The interval Cys558 to Gln622 is disordered. The FH1 domain maps to Pro561 to Pro631. Over residues Leu575–Pro600 the composition is skewed to pro residues. At Ser624 the chain carries Phosphoserine. Positions Pro636–Leu1034 constitute an FH2 domain. A coiled-coil region spans residues Lys1013–Gly1056. The 31-residue stretch at Asp1057 to Asp1087 folds into the DAD domain. A phosphoserine mark is found at Ser1093 and Ser1179. The Nuclear export signal signature appears at Glu1184–Leu1193.

It belongs to the formin homology family. Diaphanous subfamily. Ubiquitinated.

The protein localises to the cytoplasm. It localises to the nucleus. Functionally, actin nucleation and elongation factor required for the assembly of F-actin structures, such as actin cables and stress fibers. Required for cytokinesis, stress fiber formation and transcriptional activation of the serum response factor. Binds to GTP-bound form of Rho and to profilin: acts in a Rho-dependent manner to recruit profilin to the membrane, where it promotes actin polymerization. DFR proteins couple Rho and Src tyrosine kinase during signaling and the regulation of actin dynamics. Also acts as an actin nucleation and elongation factor in the nucleus by promoting nuclear actin polymerization inside the nucleus to drive serum-dependent SRF-MRTFA activity. This chain is Protein diaphanous homolog 3 (DIAPH3), found in Homo sapiens (Human).